Consider the following 180-residue polypeptide: 3-hydroxyanthranilate 3,4-dioxygenase (180 aa).

Residue R46 participates in O2 binding. Fe cation contacts are provided by H50, E56, and H94. A substrate-binding site is contributed by E56. The substrate site is built by R98 and E109. The Fe cation site is built by C124, C127, C161, and C164.

It belongs to the 3-HAO family. In terms of assembly, homodimer. It depends on Fe(2+) as a cofactor.

The catalysed reaction is 3-hydroxyanthranilate + O2 = (2Z,4Z)-2-amino-3-carboxymuconate 6-semialdehyde. Its pathway is cofactor biosynthesis; NAD(+) biosynthesis; quinolinate from L-kynurenine: step 3/3. Its function is as follows. Catalyzes the oxidative ring opening of 3-hydroxyanthranilate to 2-amino-3-carboxymuconate semialdehyde, which spontaneously cyclizes to quinolinate. The polypeptide is 3-hydroxyanthranilate 3,4-dioxygenase (Ruegeria pomeroyi (strain ATCC 700808 / DSM 15171 / DSS-3) (Silicibacter pomeroyi)).